The primary structure comprises 303 residues: Ribonuclease HIII (303 aa).

Residues 89–303 (WSVLGSDEVG…ANTKKAERLL (215 aa)) form the RNase H type-2 domain. A divalent metal cation-binding residues include D95, E96, and D199.

This sequence belongs to the RNase HII family. RnhC subfamily. Requires Mn(2+) as cofactor. It depends on Mg(2+) as a cofactor.

The protein resides in the cytoplasm. The enzyme catalyses Endonucleolytic cleavage to 5'-phosphomonoester.. Endonuclease that specifically degrades the RNA of RNA-DNA hybrids. The protein is Ribonuclease HIII of Leuconostoc mesenteroides subsp. mesenteroides (strain ATCC 8293 / DSM 20343 / BCRC 11652 / CCM 1803 / JCM 6124 / NCDO 523 / NBRC 100496 / NCIMB 8023 / NCTC 12954 / NRRL B-1118 / 37Y).